The following is a 668-amino-acid chain: Protein-glutamine gamma-glutamyltransferase (668 aa).

The Cytoplasmic segment spans residues 1-6 (MNAIPR). A helical transmembrane segment spans residues 7-27 (VALVWLLVAQVLVILPHLAYM). The Periplasmic portion of the chain corresponds to 28–50 (PLWIAAMWLGCAAWRVQVFRMRA). Residues 51 to 71 (GYPRAWVKLALALLAGAGVWL) form a helical membrane-spanning segment. The Cytoplasmic segment spans residues 72-74 (SRG). A helical transmembrane segment spans residues 75–95 (SLVGLDAGAVLLIAAFILKLV). Over 96 to 103 (EMKTRRDA) the chain is Periplasmic. The next 2 helical transmembrane spans lie at 104-124 (LVLV…DDGF) and 125-145 (LAAL…IGLQ). Topologically, residues 146-158 (QSAFASRPWPTLR) are cytoplasmic. A helical membrane pass occupies residues 159-179 (LAGGLLLQALPLMLLLFLFFP). The Periplasmic portion of the chain corresponds to 180 to 548 (RLGPLWSLPM…FGGLDPTRLG (369 aa)). Cysteine 404 functions as the Nucleophile in the catalytic mechanism. Residues histidine 448 and aspartate 464 contribute to the active site. A helical membrane pass occupies residues 549–569 (LLLGAAAILSVGLLALFLLKP). The Cytoplasmic portion of the chain corresponds to 570–668 (WQGRGDLRSR…TRDGRGEEQA (99 aa)).

This sequence belongs to the transglutaminase-like superfamily.

It localises to the cell inner membrane. It catalyses the reaction L-glutaminyl-[protein] + L-lysyl-[protein] = [protein]-L-lysyl-N(6)-5-L-glutamyl-[protein] + NH4(+). Displays transglutaminase activity (TGase) in vitro. Plays a critical role in the viability of P.aeruginosa. Might contribute to an essential function linked to the cell wall. The sequence is that of Protein-glutamine gamma-glutamyltransferase (tgpA) from Pseudomonas aeruginosa (strain ATCC 15692 / DSM 22644 / CIP 104116 / JCM 14847 / LMG 12228 / 1C / PRS 101 / PAO1).